The chain runs to 184 residues: Photosystem I assembly protein Ycf4 (184 aa).

A run of 2 helical transmembrane segments spans residues glycine 20–isoleucine 40 and isoleucine 64–isoleucine 84.

This sequence belongs to the Ycf4 family.

It localises to the plastid. The protein resides in the chloroplast thylakoid membrane. In terms of biological role, seems to be required for the assembly of the photosystem I complex. The chain is Photosystem I assembly protein Ycf4 from Citrus sinensis (Sweet orange).